The following is a 243-amino-acid chain: MRSGVIAQKVGMMRVFTEAGEHIPVTVLKLGNCQVVGHRTKDKNGYTALQLGAGARKSVYMPKAERGQFAVAKVEPKRKVAEFRVSEDAIIPVGAEIQADHFVVGQFVDVTGTSIGKGYAGGMKRWNFGGLRATHGVSVSHRSIGSTGGRQDPGKTFKNKKMPGHMGVDRITTLNLRVVQTDVERGLLLVEGAVPGSKGGWITVRDAVKKPLPKEAAKPGKFKLADGGDKAAAAPEATAGEGA.

Disordered stretches follow at residues 139–164 and 218–243; these read VSHR…KMPG and KPGK…GEGA. Gln151 is subject to N5-methylglutamine. Residues 218–229 are compositionally biased toward basic and acidic residues; sequence KPGKFKLADGGD. Over residues 230 to 243 the composition is skewed to low complexity; the sequence is KAAAAPEATAGEGA.

It belongs to the universal ribosomal protein uL3 family. In terms of assembly, part of the 50S ribosomal subunit. Forms a cluster with proteins L14 and L19. In terms of processing, methylated by PrmB.

In terms of biological role, one of the primary rRNA binding proteins, it binds directly near the 3'-end of the 23S rRNA, where it nucleates assembly of the 50S subunit. This Afipia carboxidovorans (strain ATCC 49405 / DSM 1227 / KCTC 32145 / OM5) (Oligotropha carboxidovorans) protein is Large ribosomal subunit protein uL3.